A 91-amino-acid chain; its full sequence is DNA-binding protein HU (91 aa).

It belongs to the bacterial histone-like protein family.

Its function is as follows. Histone-like DNA-binding protein which is capable of wrapping DNA to stabilize it, and thus to prevent its denaturation under extreme environmental conditions. Also seems to act as a fortuitous virulence factor in delayed sequelae by binding to heparan sulfate-proteoglycans in the extracellular matrix of target organs and acting as a nidus for in situ immune complex formation. The polypeptide is DNA-binding protein HU (hup) (Streptococcus pyogenes serotype M1).